The following is a 466-amino-acid chain: Ribosomal protein uS12 methylthiotransferase RimO (466 aa).

The region spanning 16 to 127 (PKVAFAHLGC…IVDVLQRVEA (112 aa)) is the MTTase N-terminal domain. Positions 25, 61, 90, 165, 169, and 172 each coordinate [4Fe-4S] cluster. The 230-residue stretch at 151 to 380 (TTDQAVAYLK…MALQQPIAAE (230 aa)) folds into the Radical SAM core domain. Residues 383 to 454 (QRWVGKTVDV…IYDLTGHIVG (72 aa)) form the TRAM domain.

It belongs to the methylthiotransferase family. RimO subfamily. [4Fe-4S] cluster serves as cofactor.

The protein localises to the cytoplasm. The catalysed reaction is L-aspartate(89)-[ribosomal protein uS12]-hydrogen + (sulfur carrier)-SH + AH2 + 2 S-adenosyl-L-methionine = 3-methylsulfanyl-L-aspartate(89)-[ribosomal protein uS12]-hydrogen + (sulfur carrier)-H + 5'-deoxyadenosine + L-methionine + A + S-adenosyl-L-homocysteine + 2 H(+). Its function is as follows. Catalyzes the methylthiolation of an aspartic acid residue of ribosomal protein uS12. This is Ribosomal protein uS12 methylthiotransferase RimO from Synechococcus sp. (strain CC9902).